A 169-amino-acid polypeptide reads, in one-letter code: Ureidoglycolate lyase (169 aa).

Belongs to the ureidoglycolate lyase family. In terms of assembly, homodimer. Ni(2+) is required as a cofactor.

The enzyme catalyses (S)-ureidoglycolate = urea + glyoxylate. It participates in nitrogen metabolism; (S)-allantoin degradation. Functionally, catalyzes the catabolism of the allantoin degradation intermediate (S)-ureidoglycolate, generating urea and glyoxylate. Involved in the utilization of allantoin as nitrogen source. The polypeptide is Ureidoglycolate lyase (Brucella ovis (strain ATCC 25840 / 63/290 / NCTC 10512)).